A 164-amino-acid chain; its full sequence is Anthrone oxygenase AgnL2 (164 aa).

The next 3 helical transmembrane spans lie at 11-31 (VVTG…AVPV), 48-70 (RMYH…LYAY), and 85-105 (VFAL…LCMV).

The protein belongs to the anthrone oxygenase family.

Its subcellular location is the membrane. It carries out the reaction emodin anthrone + O2 = emodin + H2O + H(+). It functions in the pathway secondary metabolite biosynthesis. Functionally, anthrone oxygenase; part of the gene cluster that mediates the biosynthesis of agnestins, dihydroxy-xanthone metabolites. The pathway begins with the assembly and cyclization of atrochrysone thioester by the non-reducing polyketide synthase Agnpks1. The atrochrysone carboxyl ACP thioesterase AgnL7 then breaks the thioester bond and releases the atrochrysone carboxylic acid as the first enzyme-free intermediate. The decarboxylase AgnL1 then catalyzes the concerted decarboxylation-elimination required to convert atochrysone carboxylic acid into emodin anthrone, which is further oxidized to emodin by the anthrone oxygenase AgnL2. Emodin then undergoes reduction catalyzed by the oxidoreductase AgnL4 to yield the dihydroquinone tautomer which is the substrate for reduction by the short chain dehydrogenase AgnL6 reduction to produce hydroxyketone, followed by AgnL8 dehydration and likely spontaneous autoxidation to chrysophanol. Baeyer-Villiger oxidation by the oxidase AgnL3 leads to monodictyphenone via cleavage of the C-10/C-10a bond of chrysophanol. Alternative cleavage at the C-4a/C-10 bond of chrysophanol also leads to the formation some cephalone F. Further conversion to agnestins A and B, requires reduction to dihydro-monodictyphenone, oxidation to agnestin C probably via an epoxide, and rearrangement to either agnestin A or agnestin B directly, although agnestin A or agnestin B can also interconvert. Within the cluster, AgnR1 is the only unassigned oxidoreductase present which could be involved in this conversion. However, AgnR1 seems not to be involved in this step, and thus genes involved in the proposed oxidation/reduction may be located elsewhere on the genome. Further agnestin A derivatives are probably formed by spontaneous decarboxylations, dehydrations and methanolysis reactions. The protein is Anthrone oxygenase AgnL2 of Paecilomyces divaricatus (Penicillium divaricatum).